A 79-amino-acid chain; its full sequence is Acyl carrier protein (79 aa).

Positions 2-77 (STIEERVKKI…QAIDYVKSHV (76 aa)) constitute a Carrier domain. An O-(pantetheine 4'-phosphoryl)serine modification is found at Ser37.

Belongs to the acyl carrier protein (ACP) family. 4'-phosphopantetheine is transferred from CoA to a specific serine of apo-ACP by AcpS. This modification is essential for activity because fatty acids are bound in thioester linkage to the sulfhydryl of the prosthetic group.

It localises to the cytoplasm. It functions in the pathway lipid metabolism; fatty acid biosynthesis. In terms of biological role, carrier of the growing fatty acid chain in fatty acid biosynthesis. The polypeptide is Acyl carrier protein (Xanthomonas oryzae pv. oryzae (strain MAFF 311018)).